Consider the following 497-residue polypeptide: Glutathione hydrolase 6 (497 aa).

The disordered stretch occupies residues 1-34 (MDATTGPVHYHKLQLWEPGVESEEEEEEEEEEIA). The Cytoplasmic portion of the chain corresponds to 1–51 (MDATTGPVHYHKLQLWEPGVESEEEEEEEEEEIAEPLVLSLRRLQNTPRNE). Residues 20–34 (VESEEEEEEEEEEIA) are compositionally biased toward acidic residues. The chain crosses the membrane as a helical; Signal-anchor for type II membrane protein span at residues 52-72 (VGGLPGAWARLLAGLLLLAVS). Residues 73–497 (SSLALRQLHS…PSGCCPFQGY (425 aa)) lie on the Extracellular side of the membrane. Asparagine 164, asparagine 169, asparagine 367, and asparagine 378 each carry an N-linked (GlcNAc...) asparagine glycan.

Belongs to the gamma-glutamyltransferase family. As to quaternary structure, heterodimer composed of the light and heavy chains. The active site is located in the light chain. In terms of processing, cleaved by autocatalysis into a large and a small subunit and the autocatalytic cleavage is essential to the functional activation of the enzyme.

It is found in the membrane. The catalysed reaction is an N-terminal (5-L-glutamyl)-[peptide] + an alpha-amino acid = 5-L-glutamyl amino acid + an N-terminal L-alpha-aminoacyl-[peptide]. The enzyme catalyses glutathione + H2O = L-cysteinylglycine + L-glutamate. It carries out the reaction an S-substituted glutathione + H2O = an S-substituted L-cysteinylglycine + L-glutamate. It functions in the pathway sulfur metabolism; glutathione metabolism. Functionally, hydrolyzes and transfers gamma-glutamyl moieties from glutathione and other gamma-glutamyl compounds to acceptors. The chain is Glutathione hydrolase 6 from Mus musculus (Mouse).